Consider the following 458-residue polypeptide: ATP synthase subunit beta 2 (458 aa).

148-155 is a binding site for ATP; the sequence is GGAGVGKT.

The protein belongs to the ATPase alpha/beta chains family. F-type ATPases have 2 components, CF(1) - the catalytic core - and CF(0) - the membrane proton channel. CF(1) has five subunits: alpha(3), beta(3), gamma(1), delta(1), epsilon(1). CF(0) has three main subunits: a(1), b(2) and c(9-12). The alpha and beta chains form an alternating ring which encloses part of the gamma chain. CF(1) is attached to CF(0) by a central stalk formed by the gamma and epsilon chains, while a peripheral stalk is formed by the delta and b chains.

It localises to the cell inner membrane. The enzyme catalyses ATP + H2O + 4 H(+)(in) = ADP + phosphate + 5 H(+)(out). In terms of biological role, produces ATP from ADP in the presence of a proton gradient across the membrane. The catalytic sites are hosted primarily by the beta subunits. The chain is ATP synthase subunit beta 2 from Marinomonas sp. (strain MWYL1).